The primary structure comprises 415 residues: Leucine-rich repeat-containing protein 34 (415 aa).

LRR repeat units lie at residues Ser-246–Asn-272 and Thr-274–Thr-296.

As to quaternary structure, interacts with NPM1 and NCL. Expressed in testis where it specifically localizes to germ cells (at protein level). Not detected in other tissues tested (at protein level). Expressed in pluripotent embryonic stem cells and multipotent adult germline stem cells.

Its subcellular location is the nucleus. The protein localises to the nucleolus. It localises to the cytoplasm. Functionally, highly expressed in stem cells where it may be involved in regulation of pluripotency. In embryonic stem cells (ESCs), important for normal expression of the pluripotency regulators POU5F1/OCT4 and KLF4. Also important for expression of the ectodermal marker gene NES and the endodermal marker gene GATA4. Promotes stem cell proliferation in vitro. In Mus musculus (Mouse), this protein is Leucine-rich repeat-containing protein 34.